Here is a 66-residue protein sequence, read N- to C-terminus: Movement protein TGBp3 (66 aa).

At 1–2 (MD) the chain is on the lumenal side. Residues 3-23 (FTTLIIIGVYLLVFIVYFAKI) form a helical membrane-spanning segment. Topologically, residues 24 to 66 (NTSVCTISISGASIEISGCDNPTLFEILPKLRPFNHGLSLPSN) are cytoplasmic.

It belongs to the Tymovirales TGBp3 protein family.

The protein resides in the host endoplasmic reticulum membrane. Plays a role in viral cell-to-cell propagation, by facilitating genome transport to neighboring plant cells through plasmosdesmata. May induce the formation of granular vesicles derived from the Endoplasmic reticulum, which align on actin filaments. This is Movement protein TGBp3 from Trifolium (WCMV).